The primary structure comprises 314 residues: MEHFISIRDIGKKEILNILEEAEKMEELLNSEKHSNIMNGKILATLFYEPSTRTRLSFETAMKRLGGTVVGFTDIANTSVMKGETLPDTIKVINGYADLIVMRHPSDGAPRLACEYSNIPIINAGDGSNQHPSQTMLDLYTIKREIGHIDNIKIAFIGDLKYGRTVHSLCHALSFFENIEIVFIAPKELKIPKEITDDLDNKNKLYNNNIKYSETGDIDLTGMDVVYMTRIQKERFPDLSEYQKVKGTYKLTREHVEDKDLIIMHPLPRVDEIDISVDELPQAKYFKQSFYGVPVRMAILKILNEKNKNKKSEI.

Residues Arg-53 and Thr-54 each contribute to the carbamoyl phosphate site. Lys-82 serves as a coordination point for L-aspartate. Carbamoyl phosphate contacts are provided by Arg-103, His-131, and Gln-134. Positions 164 and 230 each coordinate L-aspartate. 2 residues coordinate carbamoyl phosphate: Leu-267 and Pro-268.

Belongs to the aspartate/ornithine carbamoyltransferase superfamily. ATCase family. In terms of assembly, heterooligomer of catalytic and regulatory chains.

It carries out the reaction carbamoyl phosphate + L-aspartate = N-carbamoyl-L-aspartate + phosphate + H(+). The protein operates within pyrimidine metabolism; UMP biosynthesis via de novo pathway; (S)-dihydroorotate from bicarbonate: step 2/3. Functionally, catalyzes the condensation of carbamoyl phosphate and aspartate to form carbamoyl aspartate and inorganic phosphate, the committed step in the de novo pyrimidine nucleotide biosynthesis pathway. In Methanococcus aeolicus (strain ATCC BAA-1280 / DSM 17508 / OCM 812 / Nankai-3), this protein is Aspartate carbamoyltransferase catalytic subunit.